A 34-amino-acid polypeptide reads, in one-letter code: Potassium channel toxin alpha-KTx 18.2 (34 aa).

3 cysteine pairs are disulfide-bonded: cysteine 7–cysteine 26, cysteine 12–cysteine 31, and cysteine 16–cysteine 33.

In terms of tissue distribution, expressed by the venom gland.

The protein resides in the secreted. Reversibly blocks Shaker B potassium channels. The sequence is that of Potassium channel toxin alpha-KTx 18.2 from Tityus discrepans (Venezuelan scorpion).